Consider the following 290-residue polypeptide: Nucleotide-binding protein BAV3158 (290 aa).

ATP is bound at residue 9–16 (GISGSGKS). 58–61 (DVRS) contributes to the GTP binding site.

This sequence belongs to the RapZ-like family.

Displays ATPase and GTPase activities. The sequence is that of Nucleotide-binding protein BAV3158 from Bordetella avium (strain 197N).